A 170-amino-acid polypeptide reads, in one-letter code: NADH-quinone oxidoreductase subunit B (170 aa).

Residues cysteine 37, cysteine 38, cysteine 102, and cysteine 131 each coordinate [4Fe-4S] cluster.

This sequence belongs to the complex I 20 kDa subunit family. In terms of assembly, NDH-1 is composed of 14 different subunits. Subunits NuoB, C, D, E, F, and G constitute the peripheral sector of the complex. [4Fe-4S] cluster serves as cofactor.

The protein resides in the cell inner membrane. The catalysed reaction is a quinone + NADH + 5 H(+)(in) = a quinol + NAD(+) + 4 H(+)(out). Functionally, NDH-1 shuttles electrons from NADH, via FMN and iron-sulfur (Fe-S) centers, to quinones in the respiratory chain. The immediate electron acceptor for the enzyme in this species is believed to be ubiquinone. Couples the redox reaction to proton translocation (for every two electrons transferred, four hydrogen ions are translocated across the cytoplasmic membrane), and thus conserves the redox energy in a proton gradient. The protein is NADH-quinone oxidoreductase subunit B of Citrifermentans bemidjiense (strain ATCC BAA-1014 / DSM 16622 / JCM 12645 / Bem) (Geobacter bemidjiensis).